Here is a 729-residue protein sequence, read N- to C-terminus: Catalase-peroxidase (729 aa).

A disordered region spans residues 1–33 (MSAHNTNESAVGKCPFHEQKEEKSVLARGAGGG). Residues 15–25 (PFHEQKEEKSV) show a composition bias toward basic and acidic residues. The segment at residues 108–229 (WHSAGTYRTV…LGATEMGLIY (122 aa)) is a cross-link (tryptophyl-tyrosyl-methioninium (Trp-Tyr) (with M-255)). His109 functions as the Proton acceptor in the catalytic mechanism. The tryptophyl-tyrosyl-methioninium (Tyr-Met) (with W-108) cross-link spans 229 to 255 (YVNPEGPEASGNPASAAPAIRATFGNM). His270 provides a ligand contact to heme b.

Belongs to the peroxidase family. Peroxidase/catalase subfamily. In terms of assembly, homodimer or homotetramer. Requires heme b as cofactor. Formation of the three residue Trp-Tyr-Met cross-link is important for the catalase, but not the peroxidase activity of the enzyme.

It carries out the reaction H2O2 + AH2 = A + 2 H2O. It catalyses the reaction 2 H2O2 = O2 + 2 H2O. In terms of biological role, bifunctional enzyme with both catalase and broad-spectrum peroxidase activity. The chain is Catalase-peroxidase from Erwinia tasmaniensis (strain DSM 17950 / CFBP 7177 / CIP 109463 / NCPPB 4357 / Et1/99).